Reading from the N-terminus, the 285-residue chain is Probable endonuclease 4 (285 aa).

His-69, His-109, Glu-145, Asp-179, His-182, His-216, Asp-229, His-231, and Glu-261 together coordinate Zn(2+).

The protein belongs to the AP endonuclease 2 family. It depends on Zn(2+) as a cofactor.

The enzyme catalyses Endonucleolytic cleavage to 5'-phosphooligonucleotide end-products.. In terms of biological role, endonuclease IV plays a role in DNA repair. It cleaves phosphodiester bonds at apurinic or apyrimidinic (AP) sites, generating a 3'-hydroxyl group and a 5'-terminal sugar phosphate. The protein is Probable endonuclease 4 of Escherichia fergusonii (strain ATCC 35469 / DSM 13698 / CCUG 18766 / IAM 14443 / JCM 21226 / LMG 7866 / NBRC 102419 / NCTC 12128 / CDC 0568-73).